A 114-amino-acid polypeptide reads, in one-letter code: Probable acid stress chaperone HdeA (114 aa).

Residues 1 to 26 form the signal peptide; the sequence is MIKALFNKNTALAAVTILALSGGAMA. A disulfide bridge connects residues cysteine 46 and cysteine 94.

This sequence belongs to the HdeA family.

It localises to the periplasm. Required for optimal acid stress protection. Exhibits a chaperone-like activity only at low pH by suppressing non-specifically the aggregation of denaturated periplasmic proteins. This is Probable acid stress chaperone HdeA from Brucella suis biovar 1 (strain 1330).